We begin with the raw amino-acid sequence, 360 residues long: Protein phosphatase 1L (360 aa).

Over 1–25 the chain is Extracellular; that stretch reads MIEDTMTLLSLLGRIMRYFLLRPET. The helical transmembrane segment at 26-42 threads the bilayer; the sequence is LFLLCISLALWSYFFHT. The Cytoplasmic portion of the chain corresponds to 43–360; the sequence is DEVKTIVKSS…FRNSSKTEEQ (318 aa). The region spanning 92–351 is the PPM-type phosphatase domain; the sequence is NVAVYSIQGR…DNITVMVVKF (260 aa). Mn(2+) contacts are provided by D128, G129, D302, and D342.

The protein belongs to the PP2C family. In terms of assembly, interacts with MAP3K7/TAK1. Interacts with MAP3K5. Mg(2+) is required as a cofactor. Mn(2+) serves as cofactor. In terms of tissue distribution, ubiquitous. Highly expressed in heart, placenta, lung, liver, kidney and pancreas.

The protein localises to the membrane. The enzyme catalyses O-phospho-L-seryl-[protein] + H2O = L-seryl-[protein] + phosphate. It carries out the reaction O-phospho-L-threonyl-[protein] + H2O = L-threonyl-[protein] + phosphate. Its function is as follows. Acts as a suppressor of the SAPK signaling pathways by associating with and dephosphorylating MAP3K7/TAK1 and MAP3K5, and by attenuating the association between MAP3K7/TAK1 and MAP2K4 or MAP2K6. The protein is Protein phosphatase 1L (PPM1L) of Homo sapiens (Human).